Consider the following 321-residue polypeptide: Putative pyridoxal kinase (321 aa).

Substrate contacts are provided by serine 23 and tyrosine 144. ATP is bound by residues 203 to 204 and 230 to 242; these read TS and TFPRLVGQFVGTG. Residue aspartate 243 participates in substrate binding.

It belongs to the pyridoxine kinase family. Requires Zn(2+) as cofactor. It depends on Mg(2+) as a cofactor.

It carries out the reaction pyridoxal + ATP = pyridoxal 5'-phosphate + ADP + H(+). Functionally, required for synthesis of pyridoxal-5-phosphate from vitamin B6. This Caenorhabditis elegans protein is Putative pyridoxal kinase.